A 242-amino-acid chain; its full sequence is MSKRRIAPLTFLRRLLLRILAALAVFWGGGIALFSVVPVPFSAVMAERQISAWLGGEFGYVAHSDWVSMADISPWMGLAVIAAEDQKFPEHWGFDVPAIEKALAHNERNESRIRGASTLSQQTAKNLFLWDGRSWVRKGLEAGLTLGIETVWSKKRILTVYLNIAEFGDGIFGVEAAAQRYFHKPASRLSLSEAALLAAVLPNPIRYKANAPSGYVRSRQAWIMRQMRQLGGESFMTRNQLN.

The chain crosses the membrane as a helical span at residues 19–39; sequence ILAALAVFWGGGIALFSVVPV.

The protein belongs to the glycosyltransferase 51 family.

The protein localises to the cell inner membrane. It carries out the reaction [GlcNAc-(1-&gt;4)-Mur2Ac(oyl-L-Ala-gamma-D-Glu-L-Lys-D-Ala-D-Ala)](n)-di-trans,octa-cis-undecaprenyl diphosphate + beta-D-GlcNAc-(1-&gt;4)-Mur2Ac(oyl-L-Ala-gamma-D-Glu-L-Lys-D-Ala-D-Ala)-di-trans,octa-cis-undecaprenyl diphosphate = [GlcNAc-(1-&gt;4)-Mur2Ac(oyl-L-Ala-gamma-D-Glu-L-Lys-D-Ala-D-Ala)](n+1)-di-trans,octa-cis-undecaprenyl diphosphate + di-trans,octa-cis-undecaprenyl diphosphate + H(+). It functions in the pathway cell wall biogenesis; peptidoglycan biosynthesis. Peptidoglycan polymerase that catalyzes glycan chain elongation from lipid-linked precursors. In Salmonella newport (strain SL254), this protein is Biosynthetic peptidoglycan transglycosylase.